Here is a 341-residue protein sequence, read N- to C-terminus: Phosphate acyltransferase (341 aa).

It belongs to the PlsX family. In terms of assembly, homodimer. Probably interacts with PlsY.

The protein localises to the cytoplasm. The enzyme catalyses a fatty acyl-[ACP] + phosphate = an acyl phosphate + holo-[ACP]. It participates in lipid metabolism; phospholipid metabolism. Catalyzes the reversible formation of acyl-phosphate (acyl-PO(4)) from acyl-[acyl-carrier-protein] (acyl-ACP). This enzyme utilizes acyl-ACP as fatty acyl donor, but not acyl-CoA. This Vibrio parahaemolyticus serotype O3:K6 (strain RIMD 2210633) protein is Phosphate acyltransferase.